Reading from the N-terminus, the 443-residue chain is ATP-dependent protease ATPase subunit HslU (443 aa).

ATP is bound by residues I20, 62–67 (GVGKTE), D255, E321, and R393.

It belongs to the ClpX chaperone family. HslU subfamily. In terms of assembly, a double ring-shaped homohexamer of HslV is capped on each side by a ring-shaped HslU homohexamer. The assembly of the HslU/HslV complex is dependent on binding of ATP.

The protein localises to the cytoplasm. ATPase subunit of a proteasome-like degradation complex; this subunit has chaperone activity. The binding of ATP and its subsequent hydrolysis by HslU are essential for unfolding of protein substrates subsequently hydrolyzed by HslV. HslU recognizes the N-terminal part of its protein substrates and unfolds these before they are guided to HslV for hydrolysis. The sequence is that of ATP-dependent protease ATPase subunit HslU from Helicobacter pylori (strain G27).